A 331-amino-acid chain; its full sequence is Holliday junction branch migration complex subunit RuvB (331 aa).

The segment at 1–171 (MTEPLDAALR…FGIIEHLEYY (171 aa)) is large ATPase domain (RuvB-L). Residues leucine 9, arginine 10, glycine 51, lysine 54, threonine 55, threonine 56, 118–120 (EDF), arginine 161, tyrosine 171, and arginine 208 each bind ATP. Threonine 55 contributes to the Mg(2+) binding site. The segment at 172–242 (TPEEIGTNLL…RAQDALDKLG (71 aa)) is small ATPAse domain (RuvB-S). The segment at 245–331 (TAGLDERDKK…AESDLGLYTN (87 aa)) is head domain (RuvB-H). Residues arginine 300 and arginine 305 each coordinate DNA.

This sequence belongs to the RuvB family. Homohexamer. Forms an RuvA(8)-RuvB(12)-Holliday junction (HJ) complex. HJ DNA is sandwiched between 2 RuvA tetramers; dsDNA enters through RuvA and exits via RuvB. An RuvB hexamer assembles on each DNA strand where it exits the tetramer. Each RuvB hexamer is contacted by two RuvA subunits (via domain III) on 2 adjacent RuvB subunits; this complex drives branch migration. In the full resolvosome a probable DNA-RuvA(4)-RuvB(12)-RuvC(2) complex forms which resolves the HJ.

The protein localises to the cytoplasm. The enzyme catalyses ATP + H2O = ADP + phosphate + H(+). In terms of biological role, the RuvA-RuvB-RuvC complex processes Holliday junction (HJ) DNA during genetic recombination and DNA repair, while the RuvA-RuvB complex plays an important role in the rescue of blocked DNA replication forks via replication fork reversal (RFR). RuvA specifically binds to HJ cruciform DNA, conferring on it an open structure. The RuvB hexamer acts as an ATP-dependent pump, pulling dsDNA into and through the RuvAB complex. RuvB forms 2 homohexamers on either side of HJ DNA bound by 1 or 2 RuvA tetramers; 4 subunits per hexamer contact DNA at a time. Coordinated motions by a converter formed by DNA-disengaged RuvB subunits stimulates ATP hydrolysis and nucleotide exchange. Immobilization of the converter enables RuvB to convert the ATP-contained energy into a lever motion, pulling 2 nucleotides of DNA out of the RuvA tetramer per ATP hydrolyzed, thus driving DNA branch migration. The RuvB motors rotate together with the DNA substrate, which together with the progressing nucleotide cycle form the mechanistic basis for DNA recombination by continuous HJ branch migration. Branch migration allows RuvC to scan DNA until it finds its consensus sequence, where it cleaves and resolves cruciform DNA. This Deinococcus geothermalis (strain DSM 11300 / CIP 105573 / AG-3a) protein is Holliday junction branch migration complex subunit RuvB.